The sequence spans 78 residues: Pigment-dispersing hormone 2 peptides (78 aa).

The first 21 residues, 1-21 (MRSGVFVAVLVVVVFALLTQG), serve as a signal peptide directing secretion. Alanine 75 is modified (alanine amide).

Belongs to the arthropod PDH family. As to expression, eyestalk sinus gland.

The protein resides in the secreted. In terms of biological role, the pigment-dispersing hormone causes the migration of the distal retinal pigment into the proximal end of the pigment chromatophore cells and thus decreases the amount of light entering the retinulas. May also function as a neurotransmitter and/or neuromodulator. This Callinectes sapidus (Blue crab) protein is Pigment-dispersing hormone 2 peptides (PDH2).